The sequence spans 625 residues: Phosphomethylpyrimidine synthase (625 aa).

Residues asparagine 231, methionine 260, tyrosine 289, histidine 325, 345 to 347, 386 to 389, and glutamate 425 contribute to the substrate site; these read SRG and DGLR. Zn(2+) is bound at residue histidine 429. Tyrosine 452 is a binding site for substrate. A Zn(2+)-binding site is contributed by histidine 493. Residues cysteine 573, cysteine 576, and cysteine 581 each coordinate [4Fe-4S] cluster.

It belongs to the ThiC family. Homodimer. [4Fe-4S] cluster serves as cofactor.

The enzyme catalyses 5-amino-1-(5-phospho-beta-D-ribosyl)imidazole + S-adenosyl-L-methionine = 4-amino-2-methyl-5-(phosphooxymethyl)pyrimidine + CO + 5'-deoxyadenosine + formate + L-methionine + 3 H(+). The protein operates within cofactor biosynthesis; thiamine diphosphate biosynthesis. Its function is as follows. Catalyzes the synthesis of the hydroxymethylpyrimidine phosphate (HMP-P) moiety of thiamine from aminoimidazole ribotide (AIR) in a radical S-adenosyl-L-methionine (SAM)-dependent reaction. This Acinetobacter baumannii (strain SDF) protein is Phosphomethylpyrimidine synthase.